The primary structure comprises 336 residues: Inositol 2-dehydrogenase (336 aa).

This sequence belongs to the Gfo/Idh/MocA family. As to quaternary structure, homotetramer.

It catalyses the reaction myo-inositol + NAD(+) = scyllo-inosose + NADH + H(+). Involved in the oxidation of myo-inositol (MI) to 2-keto-myo-inositol (2KMI or 2-inosose). The protein is Inositol 2-dehydrogenase of Paracoccus denitrificans (strain Pd 1222).